The sequence spans 355 residues: Type II methyltransferase M.MthZI (355 aa).

It belongs to the N(4)/N(6)-methyltransferase family. N(4) subfamily.

It catalyses the reaction a 2'-deoxycytidine in DNA + S-adenosyl-L-methionine = an N(4)-methyl-2'-deoxycytidine in DNA + S-adenosyl-L-homocysteine + H(+). Functionally, a beta subtype methylase that recognizes the double-stranded sequence 5'-CTAG-3', methylates C-1 on both strands, and protects the DNA from cleavage by the MthZI endonuclease. This chain is Type II methyltransferase M.MthZI, found in Methanothermobacter thermautotrophicus (Methanobacterium thermoformicicum).